The chain runs to 297 residues: GATA transcription factor 24 (297 aa).

In terms of domain architecture, Tify spans 73 to 108 (GIENGDQLTLSFQGQVYVFDRVSPEKVQAVLLLLGG). Positions 143-185 (RLASLLRFREKRKGRNFDKTIRYTVRKEVALRMQRKKGQFTSA) constitute a CCT domain. The interval 178-203 (KKGQFTSAKSSNDDSGSTGSDWGSNQ) is disordered. Over residues 190 to 201 (DDSGSTGSDWGS) the composition is skewed to low complexity. The segment at 213-269 (QKPEVLCRHCGTSEKSTPMMRRGPDGPRTLCNACGLMWANKGTLRDLSKVPPPQTPQ) adopts a GATA-type zinc-finger fold.

Belongs to the type IV zinc-finger family. Class C subfamily. Predominantly expressed in shoot apices, inflorescences and roots.

Its subcellular location is the nucleus. Transcriptional activator that specifically binds 5'-GATA-3' or 5'-GAT-3' motifs within gene promoters. The sequence is that of GATA transcription factor 24 (GATA24) from Arabidopsis thaliana (Mouse-ear cress).